A 304-amino-acid chain; its full sequence is Dipeptide transport system permease protein DppC (304 aa).

The disordered stretch occupies residues 1 to 24 (MKTEHAKPLMTPEPNSPPPEDQYT). 6 helical membrane passes run 41 to 61 (LAIV…FAPL), 108 to 128 (VGFF…LIAG), 141 to 161 (IFDI…VAIL), 164 to 184 (SLQN…GRLV), 227 to 247 (ATLG…LGLG), and 271 to 291 (WTVL…NMIG). Positions 102-291 (ARLSLQVGFF…LVVLGFNMIG (190 aa)) constitute an ABC transmembrane type-1 domain.

It belongs to the binding-protein-dependent transport system permease family. OppBC subfamily.

The protein resides in the cell membrane. Functionally, probably part of the ABC transporter Dpp involved in dipeptide transport. Responsible for the translocation of the substrate across the membrane. In Alkalihalophilus pseudofirmus (strain ATCC BAA-2126 / JCM 17055 / OF4) (Bacillus pseudofirmus), this protein is Dipeptide transport system permease protein DppC (dppC).